Here is a 228-residue protein sequence, read N- to C-terminus: Isoprenyl transferase (228 aa).

D9 is a catalytic residue. Residue D9 participates in Mg(2+) binding. Residues 10–13, W14, R22, H26, and 54–56 each bind substrate; these read GNGR and STE. Residue N57 is the Proton acceptor of the active site. Substrate-binding positions include W58, R60, R175, and 181–183; that span reads RMS. E194 contributes to the Mg(2+) binding site.

This sequence belongs to the UPP synthase family. In terms of assembly, homodimer. Requires Mg(2+) as cofactor.

Functionally, catalyzes the condensation of isopentenyl diphosphate (IPP) with allylic pyrophosphates generating different type of terpenoids. The protein is Isoprenyl transferase of Treponema pallidum (strain Nichols).